We begin with the raw amino-acid sequence, 241 residues long: Uridylate kinase (241 aa).

Position 12-15 (lysine 12–glycine 15) interacts with ATP. Glycine 54 serves as a coordination point for UMP. Positions 55 and 59 each coordinate ATP. Residues aspartate 74 and valine 135 to threonine 142 each bind UMP. The ATP site is built by threonine 162, tyrosine 168, and aspartate 171.

Belongs to the UMP kinase family. In terms of assembly, homohexamer.

It localises to the cytoplasm. It carries out the reaction UMP + ATP = UDP + ADP. It functions in the pathway pyrimidine metabolism; CTP biosynthesis via de novo pathway; UDP from UMP (UMPK route): step 1/1. Inhibited by UTP. Catalyzes the reversible phosphorylation of UMP to UDP. In Sphingopyxis alaskensis (strain DSM 13593 / LMG 18877 / RB2256) (Sphingomonas alaskensis), this protein is Uridylate kinase.